The primary structure comprises 510 residues: NAD(P)H-quinone oxidoreductase subunit 2 B, chloroplastic (510 aa).

13 helical membrane passes run 24–44, 57–77, 99–119, 124–144, 150–170, 183–203, 229–249, 295–315, 323–343, 354–374, 395–415, 418–438, and 484–504; these read LLLF…GLIL, IPWL…ALLF, IFQF…VEYI, MAIT…MFLC, ITIF…SGYT, YLLM…WLYG, ISIA…PAPF, WHLL…LIAI, MLAY…IVGD, YMLF…LFGL, ALSS…AGFF, LHLF…IGLL, and MIVC…IIAI.

This sequence belongs to the complex I subunit 2 family. NDH is composed of at least 16 different subunits, 5 of which are encoded in the nucleus.

It localises to the plastid. Its subcellular location is the chloroplast thylakoid membrane. The enzyme catalyses a plastoquinone + NADH + (n+1) H(+)(in) = a plastoquinol + NAD(+) + n H(+)(out). The catalysed reaction is a plastoquinone + NADPH + (n+1) H(+)(in) = a plastoquinol + NADP(+) + n H(+)(out). Functionally, NDH shuttles electrons from NAD(P)H:plastoquinone, via FMN and iron-sulfur (Fe-S) centers, to quinones in the photosynthetic chain and possibly in a chloroplast respiratory chain. The immediate electron acceptor for the enzyme in this species is believed to be plastoquinone. Couples the redox reaction to proton translocation, and thus conserves the redox energy in a proton gradient. This Drimys granadensis protein is NAD(P)H-quinone oxidoreductase subunit 2 B, chloroplastic.